Consider the following 294-residue polypeptide: Elongation factor Ts (294 aa).

The interval 79 to 82 is involved in Mg(2+) ion dislocation from EF-Tu; the sequence is TDFV.

The protein belongs to the EF-Ts family.

It is found in the cytoplasm. Associates with the EF-Tu.GDP complex and induces the exchange of GDP to GTP. It remains bound to the aminoacyl-tRNA.EF-Tu.GTP complex up to the GTP hydrolysis stage on the ribosome. The protein is Elongation factor Ts of Geobacillus sp. (strain WCH70).